We begin with the raw amino-acid sequence, 671 residues long: DNA ligase (671 aa).

Residues 32–36, 81–82, and Glu113 each bind NAD(+); these read DAEYD and SL. The active-site N6-AMP-lysine intermediate is the Lys115. Positions 136, 173, 290, and 314 each coordinate NAD(+). Positions 408, 411, 426, and 432 each coordinate Zn(2+). A BRCT domain is found at 593 to 671; that stretch reads EIDSPFAGKT…EAEMLRLLGS (79 aa).

This sequence belongs to the NAD-dependent DNA ligase family. LigA subfamily. Mg(2+) serves as cofactor. The cofactor is Mn(2+).

The enzyme catalyses NAD(+) + (deoxyribonucleotide)n-3'-hydroxyl + 5'-phospho-(deoxyribonucleotide)m = (deoxyribonucleotide)n+m + AMP + beta-nicotinamide D-nucleotide.. Functionally, DNA ligase that catalyzes the formation of phosphodiester linkages between 5'-phosphoryl and 3'-hydroxyl groups in double-stranded DNA using NAD as a coenzyme and as the energy source for the reaction. It is essential for DNA replication and repair of damaged DNA. This Escherichia coli (strain ATCC 8739 / DSM 1576 / NBRC 3972 / NCIMB 8545 / WDCM 00012 / Crooks) protein is DNA ligase.